The primary structure comprises 441 residues: Xaa-Pro dipeptidase (441 aa).

Mn(2+) is bound by residues aspartate 244, aspartate 255, histidine 336, glutamate 381, and glutamate 420.

The protein belongs to the peptidase M24B family. Bacterial-type prolidase subfamily. Requires Mn(2+) as cofactor.

It catalyses the reaction Xaa-L-Pro dipeptide + H2O = an L-alpha-amino acid + L-proline. Its function is as follows. Splits dipeptides with a prolyl residue in the C-terminal position. This is Xaa-Pro dipeptidase from Xanthomonas oryzae pv. oryzae (strain MAFF 311018).